The chain runs to 362 residues: MASESTILSNAENLKKFLRLPQNGQLIAEYIWIDSEGGTRSKSRTLPEKESQYLPEELPIWNFDGSSTGQAPGENSDVYLKPVAVFPDPFRGSPNILVLSECWNADGTPNKFNHRHEAAKLMEAHADQVPWFGLEQEYTLLDINDRPYGWPRNGFPAPQGPYYCGVGTGKVVQRDIVEAHYKCCLYAGVKISGTNAEVMPAQWEFQVGPCDGIEMGDHLWLARFLLHRVSEEFGAKVSFDPKPIPGDWNGAGLHTNFSTENMRKEGGMKYIEDAIKKLEARHKEHIAVYGEGNDKRLTGRHETGSIDSFTYGVANRGASIRIPRECGAKGYGYFEDRRPASNADPYQITGIIMETCFGAVSE.

One can recognise a GS beta-grasp domain in the interval leucine 26–glycine 107. A GS catalytic domain is found at histidine 114–glutamate 362.

It belongs to the glutamine synthetase family. In terms of assembly, homooctamer.

The protein resides in the cytoplasm. It catalyses the reaction L-glutamate + NH4(+) + ATP = L-glutamine + ADP + phosphate + H(+). This chain is Glutamine synthetase (gln-1), found in Neurospora crassa (strain ATCC 24698 / 74-OR23-1A / CBS 708.71 / DSM 1257 / FGSC 987).